The sequence spans 141 residues: Hemoglobin subunit alpha (141 aa).

The interval 1-22 is disordered; that stretch reads VLSEDDKNRVRTSVGKNPELPG. One can recognise a Globin domain in the interval 1–141; that stretch reads VLSEDDKNRV…VSEVLESKYR (141 aa). H58 is an O2 binding site. H87 lines the heme b pocket.

This sequence belongs to the globin family. Heterotetramer of two alpha chains and two beta chains. In terms of tissue distribution, red blood cells.

In terms of biological role, involved in oxygen transport from the lung to the various peripheral tissues. This Vipera aspis (Aspic viper) protein is Hemoglobin subunit alpha (HBA).